Here is a 114-residue protein sequence, read N- to C-terminus: MSDVSLKLSAKDIYEKDFEKTMARGYRREEVDAFLDDIIADYQKMADMNNEVVKLSEENHKLKKELEELRLRVATSRPQDNKSFSSNNTTTNTSSNNVDILKRISNLEKAVFGK.

A coiled-coil region spans residues Tyr-42–Arg-77. The interval Ala-74–Asp-99 is disordered. The segment covering Ser-85–Asn-97 has biased composition (low complexity).

This sequence belongs to the GpsB family. As to quaternary structure, forms polymers through the coiled coil domains. Interacts with PBP1, MreC and EzrA.

It localises to the cytoplasm. Divisome component that associates with the complex late in its assembly, after the Z-ring is formed, and is dependent on DivIC and PBP2B for its recruitment to the divisome. Together with EzrA, is a key component of the system that regulates PBP1 localization during cell cycle progression. Its main role could be the removal of PBP1 from the cell pole after pole maturation is completed. Also contributes to the recruitment of PBP1 to the division complex. Not essential for septum formation. The polypeptide is Cell cycle protein GpsB (Staphylococcus aureus (strain Mu3 / ATCC 700698)).